The sequence spans 303 residues: Sulfotransferase 6B1 (303 aa).

65 to 70 serves as a coordination point for 3'-phosphoadenylyl sulfate; it reads KCGSNW. Catalysis depends on histidine 118, which acts as the Proton acceptor. 3'-phosphoadenylyl sulfate is bound by residues arginine 140, serine 148, tyrosine 203, 237-242, and 259-261; these read STFQAM and RKG.

It belongs to the sulfotransferase 1 family. Specifically expressed in kidney and testis.

The protein localises to the cytoplasm. It is found in the cytosol. The catalysed reaction is thyroxine + 3'-phosphoadenylyl sulfate = thyroxine sulfate + adenosine 3',5'-bisphosphate + H(+). Its function is as follows. Sulfotransferase that utilizes 3'-phospho-5'-adenylyl sulfate (PAPS) as sulfonate donor to catalyze the sulfate conjugation of thyroxine. Involved in the metabolism of thyroxine. The sequence is that of Sulfotransferase 6B1 (SULT6B1) from Homo sapiens (Human).